Consider the following 1128-residue polypeptide: Glutamate receptor-interacting protein 1 (1128 aa).

Ser-43 is modified (phosphoserine). 6 PDZ domains span residues 53–136, 150–238, 252–336, 472–561, 573–658, and 673–755; these read VVEL…EYEL, TVEV…EYDV, LVEV…LPHH, EVVL…EFDV, HVKL…RKDE, and TVEL…KKQT. 2 disordered regions span residues 754-798 and 935-981; these read QTDA…YPST and MSLN…GRKS. Residues 944 to 974 show a composition bias toward polar residues; it reads PRSQLGRQASFQERSSSRPHYSQTTRSNTLP. The 83-residue stretch at 1004 to 1086 folds into the PDZ 7 domain; sequence KVTLYKDSDM…KLDLVISRNP (83 aa). The span at 1093 to 1115 shows a compositional bias: polar residues; the sequence is IDQQSLPGDWSEQNSAFFQQPSH. Positions 1093-1128 are disordered; that stretch reads IDQQSLPGDWSEQNSAFFQQPSHGGNLETREPTNTL.

As to quaternary structure, interacts with EPHA7, EPHB2, KIF5A, KIF5B, KIF5C, GRIA2, GRIA3, GRIPAP1/GRASP1, PPFIA1, PPFIA4, FRAS1, PLCD4, PTPRF and liprins-alpha. Can form homomultimers or heteromultimers with GRIP2. Forms a ternary complex with GRIA2 and CSPG4. Interacts with ATAD1 in an ATP-dependent manner. ATAD1-catalyzed ATP hydrolysis disrupts binding to ATAD1 and to GRIA2 and leads to AMPAR complex disassembly. Interacts with EFNB1, EFNB3 and the C-terminal tail of PRLHR. Interacts with SLC30A9. Interacts with BUD23. Forms a complex with NSG1, GRIA2 and STX12; controls the intracellular fate of AMPAR and the endosomal sorting of the GRIA2 subunit toward recycling and membrane targeting. Interacts with NSG1.

It is found in the cytoplasmic vesicle. Its subcellular location is the perikaryon. The protein resides in the cell projection. It localises to the dendrite. The protein localises to the cytoplasm. It is found in the endomembrane system. Its subcellular location is the postsynaptic cell membrane. The protein resides in the postsynaptic density. It localises to the endoplasmic reticulum membrane. May play a role as a localized scaffold for the assembly of a multiprotein signaling complex and as mediator of the trafficking of its binding partners at specific subcellular location in neurons. Through complex formation with NSG1, GRIA2 and STX12 controls the intracellular fate of AMPAR and the endosomal sorting of the GRIA2 subunit toward recycling and membrane targeting. This is Glutamate receptor-interacting protein 1 (GRIP1) from Homo sapiens (Human).